Consider the following 385-residue polypeptide: MDVREAMKNQTHVAMILSGHVLSSAPKDSNVIFSPASINSAITMHAAGPGGDLVSGQILSFLRSSSIDELKTVFRELASVVYADRSATGGPKITAANGLWIDKSLPTDPKFKDLFENFFKAVYVPVDFRSEAEEVRKEVNSWVEHHTNNLIKDLLPDGSVTSLTNKIYANALSFKGAWKRPFEKYYTRDNDFYLVNGTSVSVPFMSSYENQYVRAYDGFKVLRLPYQRGSDDTNRKFSMYFYLPDKKDGLDDLLEKMASTPGFLDSHIPTYRDELEKFRIPKFKIEFGFSVTSVLDRLGLRSMSMYHKACVEIDEEGAEAAAATADGDCGCSLDFVEPPKKIDFVADHPFLFLIREEKTGTVLFVGQIFDPSGPCSGSNSDSDDY.

The segment at 317-341 (GAEAAAATADGDCGCSLDFVEPPKK) is RCL.

Belongs to the serpin family.

Its function is as follows. Probable serine protease inhibitor. This Arabidopsis thaliana (Mouse-ear cress) protein is Serpin-Z1.